Consider the following 205-residue polypeptide: GTP cyclohydrolase-2 (205 aa).

Residue Arg49 to Glu53 participates in GTP binding. Residues Cys54, Cys65, and Cys67 each contribute to the Zn(2+) site. GTP contacts are provided by residues Gln70, Glu92–Arg94, and Thr114. Asp126 serves as the catalytic Proton acceptor. Arg128 functions as the Nucleophile in the catalytic mechanism. Positions 149 and 154 each coordinate GTP.

The protein belongs to the GTP cyclohydrolase II family. The cofactor is Zn(2+).

The catalysed reaction is GTP + 4 H2O = 2,5-diamino-6-hydroxy-4-(5-phosphoribosylamino)-pyrimidine + formate + 2 phosphate + 3 H(+). Its pathway is cofactor biosynthesis; riboflavin biosynthesis; 5-amino-6-(D-ribitylamino)uracil from GTP: step 1/4. Its function is as follows. Catalyzes the conversion of GTP to 2,5-diamino-6-ribosylamino-4(3H)-pyrimidinone 5'-phosphate (DARP), formate and pyrophosphate. The chain is GTP cyclohydrolase-2 from Pseudomonas putida (strain W619).